Here is a 64-residue protein sequence, read N- to C-terminus: uncharacterized protein (64 aa).

This sequence to P.abyssi PAB3148.

This is an uncharacterized protein from Archaeoglobus fulgidus (strain ATCC 49558 / DSM 4304 / JCM 9628 / NBRC 100126 / VC-16).